Reading from the N-terminus, the 129-residue chain is Ribosome-binding factor A (129 aa).

Belongs to the RbfA family. Monomer. Binds 30S ribosomal subunits, but not 50S ribosomal subunits or 70S ribosomes.

Its subcellular location is the cytoplasm. In terms of biological role, one of several proteins that assist in the late maturation steps of the functional core of the 30S ribosomal subunit. Associates with free 30S ribosomal subunits (but not with 30S subunits that are part of 70S ribosomes or polysomes). Required for efficient processing of 16S rRNA. May interact with the 5'-terminal helix region of 16S rRNA. This chain is Ribosome-binding factor A, found in Actinobacillus succinogenes (strain ATCC 55618 / DSM 22257 / CCUG 43843 / 130Z).